The chain runs to 339 residues: Putative phosphate acyltransferase (339 aa).

The protein belongs to the PlsX family. In terms of assembly, homodimer. Probably interacts with PlsY.

Its subcellular location is the cytoplasm. It catalyses the reaction a fatty acyl-[ACP] + phosphate = an acyl phosphate + holo-[ACP]. The protein operates within lipid metabolism; phospholipid metabolism. In terms of biological role, catalyzes the reversible formation of acyl-phosphate (acyl-PO(4)) from acyl-[acyl-carrier-protein] (acyl-ACP). This enzyme utilizes acyl-ACP as fatty acyl donor, but not acyl-CoA. This is Putative phosphate acyltransferase from Clostridium perfringens (strain 13 / Type A).